The sequence spans 119 residues: uncharacterized protein (119 aa).

3 helical membrane-spanning segments follow: residues 28–48 (AWTT…HLVF), 55–75 (IEVV…NLAI), and 80–100 (PIGK…GIIV).

To M.tuberculosis Rv1342c.

The protein resides in the cell membrane. This is an uncharacterized protein from Mycobacterium leprae (strain TN).